Reading from the N-terminus, the 360-residue chain is Histidinol-phosphate aminotransferase (360 aa).

Position 222 is an N6-(pyridoxal phosphate)lysine (K222).

Belongs to the class-II pyridoxal-phosphate-dependent aminotransferase family. Histidinol-phosphate aminotransferase subfamily. As to quaternary structure, homodimer. Requires pyridoxal 5'-phosphate as cofactor.

It carries out the reaction L-histidinol phosphate + 2-oxoglutarate = 3-(imidazol-4-yl)-2-oxopropyl phosphate + L-glutamate. It functions in the pathway amino-acid biosynthesis; L-histidine biosynthesis; L-histidine from 5-phospho-alpha-D-ribose 1-diphosphate: step 7/9. This chain is Histidinol-phosphate aminotransferase, found in Listeria monocytogenes serotype 4b (strain CLIP80459).